Here is a 74-residue protein sequence, read N- to C-terminus: Peptide ToAP4 (74 aa).

The N-terminal stretch at 1-22 (MQIKHLITLFFLVLIVADQCSA) is a signal peptide. The residue at position 39 (K39) is a Lysine amide. A propeptide spanning residues 40–74 (GGRRKREIAAQIEQYRDLQKREAELEELLDRLPMF) is cleaved from the precursor.

This sequence belongs to the non-disulfide-bridged peptide (NDBP) superfamily. Short antimicrobial peptide (group 4) family. As to expression, expressed by the venom gland.

Its subcellular location is the secreted. Its function is as follows. Shows anti-inflammatory activities, since it decreases release of pro-inflammatory cytokines, and increases release of anti-inflammatory cytokines. Acts by blocking the Toll-like receptor 4 (TLR4). Also increases MHC-II expression in LPS-stimulated cells. Does not show antibacterial activity on Mycobacterium abscessus subsp. massiliense. Does not show antifungal activity. Has low hemolytic activity on human erythrocyte and low monocyte cytotoxicity. In vivo, does not induce immune cell migration. Helical wheel projections predict an amphipathic peptide with distinct hydrophobic and hydrophilic faces. The protein is Peptide ToAP4 of Tityus obscurus (Amazonian scorpion).